A 286-amino-acid polypeptide reads, in one-letter code: Thymidylate synthase (286 aa).

140-141 (RR) provides a ligand contact to dUMP. C161 acts as the Nucleophile in catalysis. DUMP-binding positions include 185 to 188 (RSND), N196, and 226 to 228 (HIY). D188 is a binding site for (6R)-5,10-methylene-5,6,7,8-tetrahydrofolate. Residue A285 coordinates (6R)-5,10-methylene-5,6,7,8-tetrahydrofolate.

Belongs to the thymidylate synthase family. Bacterial-type ThyA subfamily. In terms of assembly, homodimer.

The protein resides in the cytoplasm. The enzyme catalyses dUMP + (6R)-5,10-methylene-5,6,7,8-tetrahydrofolate = 7,8-dihydrofolate + dTMP. Its pathway is pyrimidine metabolism; dTTP biosynthesis. Functionally, catalyzes the reductive methylation of 2'-deoxyuridine-5'-monophosphate (dUMP) to 2'-deoxythymidine-5'-monophosphate (dTMP) while utilizing 5,10-methylenetetrahydrofolate (mTHF) as the methyl donor and reductant in the reaction, yielding dihydrofolate (DHF) as a by-product. This enzymatic reaction provides an intracellular de novo source of dTMP, an essential precursor for DNA biosynthesis. The polypeptide is Thymidylate synthase (Streptococcus thermophilus (strain ATCC BAA-250 / LMG 18311)).